The following is a 305-amino-acid chain: Methionyl-tRNA formyltransferase (305 aa).

A (6S)-5,6,7,8-tetrahydrofolate-binding site is contributed by 108 to 111 (SLLP).

Belongs to the Fmt family.

The enzyme catalyses L-methionyl-tRNA(fMet) + (6R)-10-formyltetrahydrofolate = N-formyl-L-methionyl-tRNA(fMet) + (6S)-5,6,7,8-tetrahydrofolate + H(+). In terms of biological role, attaches a formyl group to the free amino group of methionyl-tRNA(fMet). The formyl group appears to play a dual role in the initiator identity of N-formylmethionyl-tRNA by promoting its recognition by IF2 and preventing the misappropriation of this tRNA by the elongation apparatus. The chain is Methionyl-tRNA formyltransferase from Clavibacter sepedonicus (Clavibacter michiganensis subsp. sepedonicus).